Here is an 84-residue protein sequence, read N- to C-terminus: Putative membrane protein insertion efficiency factor (84 aa).

It belongs to the UPF0161 family.

It localises to the cell inner membrane. In terms of biological role, could be involved in insertion of integral membrane proteins into the membrane. The chain is Putative membrane protein insertion efficiency factor from Shewanella oneidensis (strain ATCC 700550 / JCM 31522 / CIP 106686 / LMG 19005 / NCIMB 14063 / MR-1).